The sequence spans 138 residues: Protein FAM136A (138 aa).

An N-acetylalanine modification is found at Ala2. Residues Thr124 and Thr126 each carry the phosphothreonine modification.

The protein belongs to the FAM136 family.

The chain is Protein FAM136A (FAM136A) from Bos taurus (Bovine).